The following is a 448-amino-acid chain: Putative RNA-ligase (448 aa).

This sequence belongs to the asfivirus M448R family.

The protein resides in the virion. The chain is Putative RNA-ligase from African swine fever virus (isolate Pig/Kenya/KEN-50/1950) (ASFV).